The sequence spans 585 residues: 3-hydroxy-3-methylglutaryl-coenzyme A reductase 1 (585 aa).

Transmembrane regions (helical) follow at residues 38 to 58 and 77 to 97; these read LYLT…FLLC and EIVA…FFGI. The segment at 98–169 is linker; that stretch reads DFVQSLVLRP…DEMPVTVMTE (72 aa). Residues 170-585 are catalytic; the sequence is EDEEIIRSVV…SSKDVSKVSS (416 aa). Glutamate 264 acts as the Charge relay system in catalysis. A glycan (N-linked (GlcNAc...) asparagine) is linked at asparagine 328. Lysine 396 serves as the catalytic Charge relay system. Asparagine 441 is a glycosylation site (N-linked (GlcNAc...) asparagine). The Charge relay system role is filled by aspartate 472. Histidine 570 (proton donor) is an active-site residue. N-linked (GlcNAc...) asparagine glycosylation occurs at asparagine 574.

The protein belongs to the HMG-CoA reductase family.

The protein resides in the endoplasmic reticulum membrane. The protein localises to the mitochondrion membrane. It is found in the plastid membrane. It catalyses the reaction (R)-mevalonate + 2 NADP(+) + CoA = (3S)-3-hydroxy-3-methylglutaryl-CoA + 2 NADPH + 2 H(+). It participates in metabolic intermediate biosynthesis; (R)-mevalonate biosynthesis; (R)-mevalonate from acetyl-CoA: step 3/3. Functionally, catalyzes the synthesis of mevalonate. The specific precursor of all isoprenoid compounds present in plants. The protein is 3-hydroxy-3-methylglutaryl-coenzyme A reductase 1 (HMG1) of Gossypium hirsutum (Upland cotton).